A 439-amino-acid polypeptide reads, in one-letter code: FBD-associated F-box protein At5g56380 (439 aa).

Residues 1–61 (MDRISHLADE…LPETWGYQEP (61 aa)) form the F-box domain. The FBD domain occupies 358-406 (WNQPGSVPRCLSSSLETLEWVEYGGTHEEKELSTYLFKTAVCFKKASFT).

This Arabidopsis thaliana (Mouse-ear cress) protein is FBD-associated F-box protein At5g56380.